The sequence spans 227 residues: MTIRMPNDRQRILVLGKTGTGKTCAAVWHLSQKDFKRKAWIVLNHKGDDLIDSIEGANHVDLNFRPKKPGLYIYHPIPDVDDAEVTQLLWDIHAMGDIGVYVDEGYMIPNRDPAFQALLTQGRSKKIPMIILSQRPVWLTRFAISESDFFQIFQLGDQRDRQTVQGFVPVDLEKLMQAPVNTVPALKKFHSIYYDVGANNCVIMTPVPTADAVLARFDLGKKRKQTL.

Residue 16–23 (GKTGTGKT) coordinates ATP.

As to quaternary structure, heterodimer of P6 and P9; further multimerizes as hexamers of heterodimers. Part of the dodecameric portal complex that is composed of the packaging efficiency factor P6, the DNA packaging ATPase P9, and the internal heterododecamer P20/P22 which spans the virion inner membrane.

The protein resides in the virion. Together with the packaging efficiency factor P6, forms the external part of the portal vertex that is embeded in the capsid and which plays critical roles in genome packaging and genome ejection. Both proteins multimerize as a single ring-shaped heterdodecamer arranged around a central channel. In Enterobacteria phage PRD1 (Bacteriophage PRD1), this protein is DNA packaging ATPase P9 (IX).